The following is a 468-amino-acid chain: Protein DML1 (468 aa).

The protein belongs to the misato family.

It localises to the mitochondrion. Functionally, involved in the partitioning of the mitochondrial organelle and mitochondrial DNA (mtDNA) inheritance. The polypeptide is Protein DML1 (DML1) (Kluyveromyces lactis (strain ATCC 8585 / CBS 2359 / DSM 70799 / NBRC 1267 / NRRL Y-1140 / WM37) (Yeast)).